We begin with the raw amino-acid sequence, 889 residues long: Serine/threonine-protein kinase D3 (889 aa).

Residues S27, S37, S41, and S44 each carry the phosphoserine modification. The Phorbol-ester/DAG-type 1 zinc finger occupies 154–204; the sequence is PHALYVHSYKAPTFCDYCGEMLWGLVRQGLKCEGCGLNYHKRCAFKIPNNC. 2 positions are modified to phosphoserine: S213 and S216. The segment at 271 to 321 adopts a Phorbol-ester/DAG-type 2 zinc-finger fold; the sequence is PHTFAVHSYGRPTICQYCKRLLKGLFRQGMQCKDCKFNCHKRCASKVPRDC. Positions 336–370 are disordered; the sequence is TDADMPMDIDSSDVNSDGSRGLDDSEEPSPPEDKM. Residues S346, S391, and S395 each carry the phosphoserine modification. The 117-residue stretch at 416-532 folds into the PH domain; the sequence is TVVKEGWMVH…WEKAIRQALM (117 aa). Y426 is subject to Phosphotyrosine. S442 carries the post-translational modification Phosphoserine. Y457 carries the post-translational modification Phosphotyrosine. T535 carries the post-translational modification Phosphothreonine. S539 carries the phosphoserine modification. The region spanning 575-831 is the Protein kinase domain; sequence IFADEVLGSG…VDKSLSHPWL (257 aa). ATP is bound by residues 581-589 and K604; that span reads LGSGQFGIV. D698 (proton acceptor) is an active-site residue. At S730 the chain carries Phosphoserine; by PKC. S734 is modified (phosphoserine; by autocatalysis). Y741 bears the Phosphotyrosine mark.

Belongs to the protein kinase superfamily. CAMK Ser/Thr protein kinase family. PKD subfamily. It depends on Mg(2+) as a cofactor.

It is found in the cytoplasm. The protein resides in the membrane. It catalyses the reaction L-seryl-[protein] + ATP = O-phospho-L-seryl-[protein] + ADP + H(+). The enzyme catalyses L-threonyl-[protein] + ATP = O-phospho-L-threonyl-[protein] + ADP + H(+). Its activity is regulated as follows. Activated by DAG and phorbol esters. Phorbol-ester/DAG-type domains 1 and 2 bind both DAG and phorbol ester with high affinity and mediate translocation to the cell membrane. Autophosphorylation of Ser-734 and phosphorylation of Ser-730 by PKC relieves auto-inhibition by the PH domain. Functionally, converts transient diacylglycerol (DAG) signals into prolonged physiological effects, downstream of PKC. Involved in resistance to oxidative stress. The chain is Serine/threonine-protein kinase D3 (Prkd3) from Mus musculus (Mouse).